We begin with the raw amino-acid sequence, 275 residues long: Membrane protein insertase YidC 1 (275 aa).

Positions 1 to 25 are cleaved as a signal peptide; that stretch reads MRKVLRVKKNIKIARIVPLVLLLVA. Residue Cys26 is the site of N-palmitoyl cysteine attachment. The S-diacylglycerol cysteine moiety is linked to residue Cys26. The next 5 helical transmembrane spans lie at 58–78, 129–149, 171–191, 198–216, and 222–240; these read SIGV…MPLF, YASL…FQAL, LYLL…LTNL, VMMT…FMGF, and VVLY…LLLL.

Belongs to the OXA1/ALB3/YidC family. Type 2 subfamily.

The protein localises to the cell membrane. Functionally, required for the insertion and/or proper folding and/or complex formation of integral membrane proteins into the membrane. Involved in integration of membrane proteins that insert both dependently and independently of the Sec translocase complex, as well as at least some lipoproteins. This is Membrane protein insertase YidC 1 from Streptococcus pyogenes serotype M1.